The sequence spans 553 residues: LIM domain-containing protein B (553 aa).

A disordered region spans residues 43 to 115 (LTYKDPNVST…SINNNISNNN (73 aa)). A compositionally biased stretch (low complexity) spans 99–114 (GPGLPNNSINNNISNN). LIM zinc-binding domains are found at residues 205-262 (PICG…ELFS), 263-322 (PRCF…RQKR), 328-387 (EICS…KQIL), 388-447 (NICG…FFGR), and 448-505 (QCFK…LPKE). Residues 534–553 (ELKKERERAAKEKEKESKAK) are disordered.

The protein resides in the cytoplasm. It is found in the cell cortex. Its subcellular location is the cytoskeleton. Functionally, regulates and controls rearrangements of the actin cytoskeleton. Required for tip formation, morphogenesis, cell adhesion and motility, chemotaxis and aggregates formation. May function downstream of paxB. This Dictyostelium discoideum (Social amoeba) protein is LIM domain-containing protein B (limB).